We begin with the raw amino-acid sequence, 595 residues long: NAD-dependent protein deacetylase hst4 (595 aa).

The segment at 1-106 (MAPRKTKPAT…HLDLTPRLGF (106 aa)) is disordered. Over residues 9–32 (ATKPAAKPTPASTATTSSCPSPKS) the composition is skewed to low complexity. The Deacetylase sirtuin-type domain maps to 109–428 (YGDQEPQLNL…SADVERVKNE (320 aa)). Residues 134-153 (GAGISTSAGIPDFRSDDGLF) and 222-225 (QNID) each bind NAD(+). Histidine 253 functions as the Proton acceptor in the catalytic mechanism. 4 residues coordinate Zn(2+): cysteine 261, cysteine 264, cysteine 283, and cysteine 286. Residues 342–344 (GTS), 373–375 (NNE), and cysteine 394 each bind NAD(+). A compositionally biased stretch (polar residues) spans 445–473 (QAQTGMLTPSSSYDGDVENASTTTLSNPA). The tract at residues 445–595 (QAQTGMLTPS…IPKGMGKLLD (151 aa)) is disordered. Basic and acidic residues-rich tracts occupy residues 478-492 (KLTEILKASKKDAPK) and 530-543 (TPEEKSVKLEEHKA).

This sequence belongs to the sirtuin family. Class I subfamily. It depends on Zn(2+) as a cofactor.

The protein resides in the nucleus. The catalysed reaction is N(6)-acetyl-L-lysyl-[protein] + NAD(+) + H2O = 2''-O-acetyl-ADP-D-ribose + nicotinamide + L-lysyl-[protein]. Functionally, NAD-dependent histone deacetylase, which could function in telomeric silencing, cell cycle progression and chromosome stability. This Emericella nidulans (strain FGSC A4 / ATCC 38163 / CBS 112.46 / NRRL 194 / M139) (Aspergillus nidulans) protein is NAD-dependent protein deacetylase hst4.